Reading from the N-terminus, the 20-residue chain is XSNSGDLVDAVVPYMGESIS.

The protein belongs to the 2-oxoacid dehydrogenase family. As to quaternary structure, forms a 24-polypeptide structural core with octahedral symmetry. The cofactor is (R)-lipoate.

It is found in the mitochondrion membrane. The catalysed reaction is N(6)-[(R)-dihydrolipoyl]-L-lysyl-[protein] + succinyl-CoA = N(6)-[(R)-S(8)-succinyldihydrolipoyl]-L-lysyl-[protein] + CoA. The protein operates within amino-acid degradation; L-lysine degradation via saccharopine pathway; glutaryl-CoA from L-lysine: step 6/6. Functionally, the 2-oxoglutarate dehydrogenase complex catalyzes the overall conversion of 2-oxoglutarate to succinyl-CoA and CO(2). It contains multiple copies of three enzymatic components: 2-oxoglutarate dehydrogenase (E1), dihydrolipoamide succinyltransferase (E2) and lipoamide dehydrogenase (E3). The sequence is that of Dihydrolipoamide-residue succinyltransferase component of 2-oxoglutarate dehydrogenase complex from Solanum tuberosum (Potato).